A 307-amino-acid polypeptide reads, in one-letter code: Ribosomal RNA small subunit methyltransferase H (307 aa).

S-adenosyl-L-methionine is bound by residues 33-35 (GGY), Asp51, Phe82, Asp96, and Gln103.

This sequence belongs to the methyltransferase superfamily. RsmH family.

The protein localises to the cytoplasm. It carries out the reaction cytidine(1402) in 16S rRNA + S-adenosyl-L-methionine = N(4)-methylcytidine(1402) in 16S rRNA + S-adenosyl-L-homocysteine + H(+). Specifically methylates the N4 position of cytidine in position 1402 (C1402) of 16S rRNA. This chain is Ribosomal RNA small subunit methyltransferase H, found in Rickettsia africae (strain ESF-5).